Reading from the N-terminus, the 2475-residue chain is MGNRGSSTSSRPPLSSEANLYAKLQDHIQRQTRPFSGGGYFNGGGDKNPVQHIKDYHIDSVSSKAKLRVIEGIIRAIAKIGFKVDTKQPIEDILKDIKKQLPDPRAGSTFVKNAEKQETVCKMIADAINQEFIDLGQDKLIDTTDGAASICRQIVLYINSLTHGLRAEYLDVHGSIENTLENIKLLNDAIKQLHERMVTEVTKAAPNEEVINAVTMIEAVYRRLLNEQNLQINILTNFIDNILTPTQKELDKLQTDEVDIIKLLNDTNSVLGTKNFGKVLSYTLCNLGIAASVANKINKALQKVGLKVEQYLQSKNWAEFDKELDLKRFSGLVSAENIAEFEKAVNLLRQTFNERHKILENSCAKKGGDEEKTPLDRRIEAQRLDRKHILMEFLNKSTQAYNDFLENVKKIGIKLVKEIALTPNITRLRDALSRINDMGTIALDLSLIGFYTNAAAREERETFLTQFMLVKNVLEEQSKIDPNFKNLYDSCSRLLQIIDFYTDIVQKKYGGGEDCECTRVGGAALTVEELGLSKAARSQVDLNQAINTFMYYYYVAQIYSNLTHNKQEFQSYEENYATILGDAIAGRLMQLDTEKNARINSPAVDLARGHVGPNPGGAQEADWKAAVSAIELEYDVKRRFYRALEGLDLYLKNITKTFVNNIDSIQTVQQMLDGVRIIGRWFTEATGDTLAQVFESFPTSAGNDSNVFTDNAPAGHYYEKVAAEIQQGRSVGTLRPVRASQAKNIRDLIGRSLSNFQALKNIINAFARIGDMLGGEELRQMVPMSPLQIYKTLLEYIQHSALSVGLKNLNQSEIGGQRVALARTPEEAAQRVYLSTVRVNDALSTRWETEDVFFTFMLKSMAAKIFIVLGIYDMFERPEPVYKLIPTRMILGGADELEPEVIPEAAELYFRLPRLAEFYQKLFSFRDENVQISMLPELEGIFSGLIRIIFMRPIELINIGDYSETEIRQLIKEINVIYQHFNLEYGEQEATKKALIHFVNEINRRFGVITRTEWEKFQRIVQEARTMNDFGMMNQTNYSILPDEDGYTQSSQLLPSDRFISPSTQPTPKWRPALYNIDSVDVQTGMLQPNSQWDLVQKFRKQLSEMFEDPSLQQELGKVSYQELIRQAINELKKEHTDKIQIVSKLIQGSESLADTDVNKIFLFHETVITGLNLLSAIYVLLNNFRNNIKGLDLDTIQKSIIEWLRETQAANVNRANLIDWLGRKHGAISEIRNPGLVVKENDVRLSRVYPDPTTNATAPQDQNLVTETLFAWIVPYVGIPAGGGVRAEQELAARYLVDNQRIMQLLLTNIFEMTSSFNKMVQVRFPETSTAQVHLDFTGLISLIDSLMADTKYFLNLLRPHIDKNIIQYYENRSNPGSFYWLEEHLIDKLIKPPTDAGGRPLPGGELGLEGVNQIINKTYILLTKPYNVLQLRGGVQRRDAANIQINNNPQPSERFEQYGRVFSRLVFYDALENNSGLRVEQVVLGDFRLSNLIRTNNAQEENTLSYWDNMAPRTYANVNDAANNLRRYRLYGSDYGIQNNRSMMMVFNQLVASYIARFYDAPSGKIYLNLINAFANGNFSQAVMELGYTHPDLARDNIAFGHRGDPTEQSVLLLSLGLMLQRLIKDTNRQGLSQHLISTLTEIPIYLKENYRANLPLFNKMFNILISQGELLKQFIQYTNVQLARPNLMGLLGANNDSVIYYNNNINVPMTGLSVGQAALRGIGGVFRPNVTLMPLGDAQNNTSDVVRKRLVAVIDGIIRGSHTLADSAMEVLHELTDHPIYLETEEHFIQNYMSRYNKEPLMPFSLSLYYLRDLRIENNEVYDPLLYPNLESGSPEFKLLYGTRKLLGNDPVQLSDMPGVQLIMKNYNETVVAREQITPTRFEHFYTHAIQALRFIVNIRSFKTVMMYNENTFGGVNLISENRDDKPIITAGIGMNAVYSLRKTLQDVISFVESSYQEEQINHIHKIVSPKGQTRTLGSNRERERIFNLFDMNIIPINVNALMRSIPLANIYNYDYSFEEIACLMYGISAEKVRSLNTAAPQPDIAEVLNIPNRPPMNTREFMLKLLINPYVSVSITQYGNELMSKGSAGYMSRIFRGDNALNMGRPKFLSDQIFNKVLFGSLYPTQFDYDEAGPGLAAGIQRGREQWGQPLSEYINQALHELVRTIRIPQKLRVLRNIIVKNQLIADLTTIREQLVSMRREVENMIQTPEIQNNPTPEVIAAAQNWTQQYRARVDTLINFIGNIGQPNSMLDLIQTITPVTVRAQLGVIFNRHGIPVPHPRQILQTDDEATQWFMTNILNIPAIIMTPFTDLANDLRTFLETLERYVFNVPRWLGPSTGRVARAPVRMAPRDMRHPISYTENSVLTYITEQNREEGPWSIVKQVGVGIQKPTLVQIGKDRFDTRLIRNLIFITNIQRLLRLRLNLELSQFRNVLVSPDHIINPSITEYGFSITGPSETFSDKQYDSDIRIL.

Glycine 2 is lipidated: N-myristoyl glycine; by host. A coiled-coil region spans residues 2185 to 2212 (KNQLIADLTTIREQLVSMRREVENMIQT).

This sequence belongs to the asfivirus polyprotein pp220 family. In terms of processing, the polyprotein is not glycosylated. Post-translationally, specific enzymatic cleavages in vivo by the viral pS273R protease yield mature proteins.

Its subcellular location is the host cytoplasm. The protein localises to the host perinuclear region. The protein resides in the virion. It is found in the host nucleus. Essential for the core assembly. Its myristoyl moiety may function as a membrane-anchoring signal to bind the developing core shell to the inner viral envelope. Functionally, the structural protein p34 is a component of the virus core shell. Its function is as follows. The structural protein p14 is a component of the virus core shell. In terms of biological role, the structural protein p37 is a component of the virus core shell. The structural protein p150 is a component of the virus core shell. The sequence is that of Polyprotein pp220 from Ornithodoros (relapsing fever ticks).